Reading from the N-terminus, the 571-residue chain is Proline--tRNA ligase (571 aa).

Belongs to the class-II aminoacyl-tRNA synthetase family. ProS type 1 subfamily. Homodimer.

The protein localises to the cytoplasm. It catalyses the reaction tRNA(Pro) + L-proline + ATP = L-prolyl-tRNA(Pro) + AMP + diphosphate. Its function is as follows. Catalyzes the attachment of proline to tRNA(Pro) in a two-step reaction: proline is first activated by ATP to form Pro-AMP and then transferred to the acceptor end of tRNA(Pro). As ProRS can inadvertently accommodate and process non-cognate amino acids such as alanine and cysteine, to avoid such errors it has two additional distinct editing activities against alanine. One activity is designated as 'pretransfer' editing and involves the tRNA(Pro)-independent hydrolysis of activated Ala-AMP. The other activity is designated 'posttransfer' editing and involves deacylation of mischarged Ala-tRNA(Pro). The misacylated Cys-tRNA(Pro) is not edited by ProRS. This is Proline--tRNA ligase from Ectopseudomonas mendocina (strain ymp) (Pseudomonas mendocina).